The chain runs to 313 residues: Methionyl-tRNA formyltransferase (313 aa).

113 to 116 (SLLP) provides a ligand contact to (6S)-5,6,7,8-tetrahydrofolate.

It belongs to the Fmt family.

It catalyses the reaction L-methionyl-tRNA(fMet) + (6R)-10-formyltetrahydrofolate = N-formyl-L-methionyl-tRNA(fMet) + (6S)-5,6,7,8-tetrahydrofolate + H(+). In terms of biological role, attaches a formyl group to the free amino group of methionyl-tRNA(fMet). The formyl group appears to play a dual role in the initiator identity of N-formylmethionyl-tRNA by promoting its recognition by IF2 and preventing the misappropriation of this tRNA by the elongation apparatus. This chain is Methionyl-tRNA formyltransferase, found in Acidithiobacillus ferrooxidans (strain ATCC 23270 / DSM 14882 / CIP 104768 / NCIMB 8455) (Ferrobacillus ferrooxidans (strain ATCC 23270)).